The sequence spans 153 residues: Endoribonuclease YbeY (153 aa).

Residues His116, His120, and His126 each coordinate Zn(2+).

This sequence belongs to the endoribonuclease YbeY family. Requires Zn(2+) as cofactor.

It localises to the cytoplasm. Single strand-specific metallo-endoribonuclease involved in late-stage 70S ribosome quality control and in maturation of the 3' terminus of the 16S rRNA. The sequence is that of Endoribonuclease YbeY from Clavibacter sepedonicus (Clavibacter michiganensis subsp. sepedonicus).